Here is a 720-residue protein sequence, read N- to C-terminus: Polyribonucleotide nucleotidyltransferase (720 aa).

Positions 485 and 491 each coordinate Mg(2+). The region spanning P552 to T615 is the KH domain. The S1 motif domain maps to G621–K689. The tract at residues P697–E720 is disordered. The span at A698–E720 shows a compositional bias: low complexity.

This sequence belongs to the polyribonucleotide nucleotidyltransferase family. Component of the RNA degradosome, which is a multiprotein complex involved in RNA processing and mRNA degradation. The cofactor is Mg(2+).

It localises to the cytoplasm. The catalysed reaction is RNA(n+1) + phosphate = RNA(n) + a ribonucleoside 5'-diphosphate. Its function is as follows. Involved in mRNA degradation. Catalyzes the phosphorolysis of single-stranded polyribonucleotides processively in the 3'- to 5'-direction. The chain is Polyribonucleotide nucleotidyltransferase from Tolumonas auensis (strain DSM 9187 / NBRC 110442 / TA 4).